A 1243-amino-acid polypeptide reads, in one-letter code: Plasma membrane calcium-transporting ATPase 2 (1243 aa).

Residues 1 to 13 (MGDMTNSDFYSKN) are compositionally biased toward polar residues. The interval 1 to 24 (MGDMTNSDFYSKNQRNESSHGGEF) is disordered. Residues 1-94 (MGDMTNSDFY…NFIPPKKPKT (94 aa)) are Cytoplasmic-facing. Phosphoserine occurs at positions 18 and 27. Residues 95–115 (FLQLVWEALQDVTLIILEIAA) form a helical membrane-spanning segment. At 116–152 (IISLGLSFYHPPGESNEGCATAQGGAEDEGEAEAGWI) the chain is on the extracellular side. The chain crosses the membrane as a helical span at residues 153–173 (EGAAILLSVICVVLVTAFNDW). The Cytoplasmic portion of the chain corresponds to 174-390 (SKEKQFRGLQ…KEKSVLQGKL (217 aa)). Positions 296–308 (EEKKDKKGVKKGD) are enriched in basic and acidic residues. Residues 296–382 (EEKKDKKGVK…KKKANMHKKE (87 aa)) are disordered. Composition is skewed to low complexity over residues 313–330 (PAAD…ANAS) and 337–356 (QDGS…GAAA). Residues 391–410 (TKLAVQIGKAGLVMSAITVI) form a helical membrane-spanning segment. Over 411–443 (ILVLYFTVDTFVVNKKPWLTECTPVYVQYFVKF) the chain is Extracellular. A helical transmembrane segment spans residues 444–461 (FIIGVTVLVVAVPEGLPL). Over 462–875 (AVTISLAYSV…MWGRNVYDSI (414 aa)) the chain is Cytoplasmic. Catalysis depends on D499, which acts as the 4-aspartylphosphate intermediate. The Mg(2+) site is built by D820 and D824. Residues 876–895 (SKFLQFQLTVNVVAVIVAFT) form a helical membrane-spanning segment. Residues 896 to 905 (GACITQDSPL) are Extracellular-facing. Residues 906–926 (KAVQMLWVNLIMDTFASLALA) form a helical membrane-spanning segment. Over 927 to 946 (TEPPTETLLLRKPYGRNKPL) the chain is Cytoplasmic. The helical transmembrane segment at 947–969 (ISRTMMKNILGHAVYQLTLIFTL) threads the bilayer. Residues 970-987 (LFVGEKMFQIDSGRNAPL) lie on the Extracellular side of the membrane. Residues 988 to 1009 (HSPPSEHYTIIFNTFVMMQLFN) traverse the membrane as a helical segment. Residues 1010–1028 (EINARKIHGERNVFDGIFR) lie on the Cytoplasmic side of the membrane. Residues 1029–1050 (NPIFCTIVLGTFAIQIVIVQFG) traverse the membrane as a helical segment. Residues 1051-1060 (GKPFSCSPLQ) lie on the Extracellular side of the membrane. A helical transmembrane segment spans residues 1061-1082 (LDQWMWCIFIGLGELVWGQVIA). Over 1083–1243 (TIPTSRLKFL…SPIHSLETSL (161 aa)) the chain is Cytoplasmic. A phosphoserine mark is found at E1107, I1116, D1117, R1121, W1130, F1131, and Q1138. The tract at residues 1123–1140 (LRRGQILWFRGLNRIQTQ) is calmodulin-binding subdomain A. T1139 bears the Phosphothreonine; by PKC mark. The tract at residues 1141–1150 (IRVVKAFRSS) is calmodulin-binding subdomain B. Phosphoserine occurs at positions 1144, 1147, 1148, 1152, 1161, 1162, 1175, and 1178. T1188 carries the post-translational modification Phosphothreonine. Positions 1194–1243 (AALKQNSSPPSSLNKNNSAIDSGINLTTDTSKSATSSSPGSPIHSLETSL) are disordered. Composition is skewed to low complexity over residues 1196–1211 (LKQN…KNNS) and 1220–1234 (TTDT…SPGS). Residue S1201 is modified to Phosphoserine; by PKA. Phosphoserine is present on S1211.

The protein belongs to the cation transport ATPase (P-type) (TC 3.A.3) family. Type IIB subfamily. Interacts with PDZD11. In terms of tissue distribution, isoforms containing segment B are found in brain, uterus, liver and kidney and in low levels in other tissues. Isoforms containing segment W are found in kidney, uterus, and pancreas. Isoforms containing segment Y are found in pancreas and in low levels in brain and heart. Isoforms containing segment Z are found in brain and heart and isoforms containing segment X are found in low levels in brain. Isoforms containing segment A are found in low levels in heart and small intestine while isoforms containing segment C are found in testis and in low levels in other tissues.

It is found in the cell membrane. Its subcellular location is the synapse. The protein resides in the apical cell membrane. It localises to the basolateral cell membrane. The catalysed reaction is Ca(2+)(in) + ATP + H2O = Ca(2+)(out) + ADP + phosphate + H(+). Functionally, ATP-driven Ca(2+) ion pump involved in the maintenance of basal intracellular Ca(2+) levels in specialized cells of cerebellar circuit and vestibular and cochlear systems. Uses ATP as an energy source to transport cytosolic Ca(2+) ions across the plasma membrane to the extracellular compartment. Has fast activation and Ca(2+) clearance rate suited to control fast neuronal Ca(2+) dynamics. At parallel fiber to Purkinje neuron synapse, mediates presynaptic Ca(2+) efflux in response to climbing fiber-induced Ca(2+) rise. Provides for fast return of Ca(2+) concentrations back to their resting levels, ultimately contributing to long-term depression induction and motor learning. Plays an essential role in hearing and balance. In cochlear hair cells, shuttles Ca(2+) ions from stereocilia to the endolymph and dissipates Ca(2+) transients generated by the opening of the mechanoelectrical transduction channels. Regulates Ca(2+) levels in the vestibular system, where it contributes to the formation of otoconia. In non-excitable cells, regulates Ca(2+) signaling through spatial control of Ca(2+) ions extrusion and dissipation of Ca(2+) transients generated by store-operated channels. In lactating mammary gland, allows for the high content of Ca(2+) ions in the milk. The chain is Plasma membrane calcium-transporting ATPase 2 (Atp2b2) from Rattus norvegicus (Rat).